A 312-amino-acid chain; its full sequence is Nodulation protein D 2 (312 aa).

Residues 6-63 (LDLNLLVALDALMTKRSVTAAARSINLSQPAMSAAIARLRTYFGDDLFTMRGRELIPT) enclose the HTH lysR-type domain. The segment at residues 23–42 (VTAAARSINLSQPAMSAAIA) is a DNA-binding region (H-T-H motif).

It belongs to the LysR transcriptional regulatory family.

Its function is as follows. Represses the expression of the nodABCIJ-nolO-noeI operon. This Sinorhizobium fredii (strain NBRC 101917 / NGR234) protein is Nodulation protein D 2 (nodD2).